A 318-amino-acid polypeptide reads, in one-letter code: Protease HtpX homolog (318 aa).

Helical transmembrane passes span M1–L21, I35–I55, and A56–V76. H167 lines the Zn(2+) pocket. Residue E168 is part of the active site. Residue H171 coordinates Zn(2+). The next 2 helical transmembrane spans lie at L178–L198 and I209–A229. E235 contributes to the Zn(2+) binding site.

This sequence belongs to the peptidase M48B family. The cofactor is Zn(2+).

Its subcellular location is the cell membrane. This chain is Protease HtpX homolog, found in Methanopyrus kandleri (strain AV19 / DSM 6324 / JCM 9639 / NBRC 100938).